The primary structure comprises 252 residues: uncharacterized protein (252 aa).

The protein belongs to the methyltransferase superfamily.

This is an uncharacterized protein from Mycobacterium sp. (strain JLS).